Here is a 98-residue protein sequence, read N- to C-terminus: Trp operon repressor homolog (98 aa).

A DNA-binding region spans residues 59–82 (QRQVSQMLGVGVATITRGSNELKA).

The protein belongs to the TrpR family. In terms of assembly, homodimer.

The protein localises to the cytoplasm. Functionally, this protein is an aporepressor. When complexed with L-tryptophan it binds the operator region of the trp operon and prevents the initiation of transcription. This chain is Trp operon repressor homolog, found in Vibrio atlanticus (strain LGP32) (Vibrio splendidus (strain Mel32)).